The following is a 325-amino-acid chain: Beta-ketoacyl-[acyl-carrier-protein] synthase III (325 aa).

Residues C113 and H250 contribute to the active site. An ACP-binding region spans residues 251 to 255 (QANIR). N280 is a catalytic residue.

The protein belongs to the thiolase-like superfamily. FabH family. Homodimer.

The protein resides in the cytoplasm. The catalysed reaction is malonyl-[ACP] + acetyl-CoA + H(+) = 3-oxobutanoyl-[ACP] + CO2 + CoA. It functions in the pathway lipid metabolism; fatty acid biosynthesis. In terms of biological role, catalyzes the condensation reaction of fatty acid synthesis by the addition to an acyl acceptor of two carbons from malonyl-ACP. Catalyzes the first condensation reaction which initiates fatty acid synthesis and may therefore play a role in governing the total rate of fatty acid production. Possesses both acetoacetyl-ACP synthase and acetyl transacylase activities. Its substrate specificity determines the biosynthesis of branched-chain and/or straight-chain of fatty acids. The polypeptide is Beta-ketoacyl-[acyl-carrier-protein] synthase III (Streptococcus suis (strain 98HAH33)).